A 203-amino-acid polypeptide reads, in one-letter code: MSNRGMLIVLSGPSGVGKGTVRQAMLEDEFRDFHYSVSMTTRKPRPGEQDGVDYYFVSKEEFEQEIANDGMLEYAQYVDNYYGTPMKYVNQTLESGRDVLLEIEVQGAMQVREKCPDGVFIFLTPPDLLELRNRIQKRGTDDQATIDKRMQKAADEIRMMENYDYAVVNDEIPNAVQRIEKIIESEHLRVPRVIDQYKKMIGE.

Positions 5–184 (GMLIVLSGPS…AVQRIEKIIE (180 aa)) constitute a Guanylate kinase-like domain. 12–19 (GPSGVGKG) provides a ligand contact to ATP.

It belongs to the guanylate kinase family.

The protein resides in the cytoplasm. The enzyme catalyses GMP + ATP = GDP + ADP. In terms of biological role, essential for recycling GMP and indirectly, cGMP. The sequence is that of Guanylate kinase from Latilactobacillus sakei subsp. sakei (strain 23K) (Lactobacillus sakei subsp. sakei).